The sequence spans 289 residues: MTRLSHQDLRRNFRQLLASDTCYHTASVFDPMSARIAADLGFEVGILGGSVASLQVLGAPDFALITLSEFAEQATRIGRVAQLPVIADADHGYGNALNVMRTIVELERAGVAALTIEDTLLPAQFGRKSTDLITVAEGVGKIRAALEARVDSEMAIIARTNAGILPNQEIISRTKQYQAAGADGICMVGIQDFDQLEQIAEHLTVPLMLVTYGNPALRDDKRLAELGVRVTIDGHGAYFAAIKATYDSLREQRQIFTQASDLSATELTHTYTQPEEYILWAKEYMSVKE.

Ser-50 serves as a coordination point for substrate. Asp-88 lines the Mg(2+) pocket. Residues Arg-159 and His-235 each contribute to the substrate site.

It belongs to the isocitrate lyase/PEP mutase superfamily. Oxaloacetate decarboxylase family. As to quaternary structure, homotetramer; dimer of dimers. Mg(2+) is required as a cofactor.

It carries out the reaction oxaloacetate + H(+) = pyruvate + CO2. Functionally, catalyzes the decarboxylation of oxaloacetate into pyruvate. Seems to play a role in maintaining cellular concentrations of bicarbonate and pyruvate. The sequence is that of Oxaloacetate decarboxylase 1 from Pseudomonas fluorescens (strain Pf0-1).